A 549-amino-acid chain; its full sequence is CTP synthase (549 aa).

The segment at 1-267 (MAKFVFITGG…CREVLDVLNL (267 aa)) is amidoligase domain. A CTP-binding site is contributed by Ser13. Ser13 is a UTP binding site. Residues 14-19 (SIGKGI) and Asp71 each bind ATP. 2 residues coordinate Mg(2+): Asp71 and Glu141. CTP-binding positions include 148-150 (DIE), 188-193 (KTKPTQ), and Lys224. Residues 188-193 (KTKPTQ) and Lys224 contribute to the UTP site. In terms of domain architecture, Glutamine amidotransferase type-1 spans 292–534 (KIALVGKYVQ…IEAAQQRLPD (243 aa)). Gly354 contacts L-glutamine. Cys381 serves as the catalytic Nucleophile; for glutamine hydrolysis. Residues 382-385 (LGMQ), Glu405, and Arg462 contribute to the L-glutamine site. Residues His507 and Glu509 contribute to the active site.

The protein belongs to the CTP synthase family. In terms of assembly, homotetramer.

The enzyme catalyses UTP + L-glutamine + ATP + H2O = CTP + L-glutamate + ADP + phosphate + 2 H(+). The catalysed reaction is L-glutamine + H2O = L-glutamate + NH4(+). It carries out the reaction UTP + NH4(+) + ATP = CTP + ADP + phosphate + 2 H(+). It participates in pyrimidine metabolism; CTP biosynthesis via de novo pathway; CTP from UDP: step 2/2. Its activity is regulated as follows. Allosterically activated by GTP, when glutamine is the substrate; GTP has no effect on the reaction when ammonia is the substrate. The allosteric effector GTP functions by stabilizing the protein conformation that binds the tetrahedral intermediate(s) formed during glutamine hydrolysis. Inhibited by the product CTP, via allosteric rather than competitive inhibition. Its function is as follows. Catalyzes the ATP-dependent amination of UTP to CTP with either L-glutamine or ammonia as the source of nitrogen. Regulates intracellular CTP levels through interactions with the four ribonucleotide triphosphates. In Synechococcus sp. (strain CC9605), this protein is CTP synthase.